Consider the following 342-residue polypeptide: Phosphate acyltransferase (342 aa).

The protein belongs to the PlsX family. In terms of assembly, homodimer. Probably interacts with PlsY.

It localises to the cytoplasm. It carries out the reaction a fatty acyl-[ACP] + phosphate = an acyl phosphate + holo-[ACP]. Its pathway is lipid metabolism; phospholipid metabolism. In terms of biological role, catalyzes the reversible formation of acyl-phosphate (acyl-PO(4)) from acyl-[acyl-carrier-protein] (acyl-ACP). This enzyme utilizes acyl-ACP as fatty acyl donor, but not acyl-CoA. The protein is Phosphate acyltransferase of Shewanella amazonensis (strain ATCC BAA-1098 / SB2B).